A 630-amino-acid polypeptide reads, in one-letter code: 1-deoxy-D-xylulose-5-phosphate synthase (630 aa).

Thiamine diphosphate-binding positions include His72 and 113-115; that span reads GHS. Residue Asp144 coordinates Mg(2+). Residues 145–146, Asn173, Tyr284, and Glu367 contribute to the thiamine diphosphate site; that span reads GA. Asn173 serves as a coordination point for Mg(2+).

It belongs to the transketolase family. DXPS subfamily. As to quaternary structure, homodimer. Requires Mg(2+) as cofactor. The cofactor is thiamine diphosphate.

The enzyme catalyses D-glyceraldehyde 3-phosphate + pyruvate + H(+) = 1-deoxy-D-xylulose 5-phosphate + CO2. Its pathway is metabolic intermediate biosynthesis; 1-deoxy-D-xylulose 5-phosphate biosynthesis; 1-deoxy-D-xylulose 5-phosphate from D-glyceraldehyde 3-phosphate and pyruvate: step 1/1. Catalyzes the acyloin condensation reaction between C atoms 2 and 3 of pyruvate and glyceraldehyde 3-phosphate to yield 1-deoxy-D-xylulose-5-phosphate (DXP). The protein is 1-deoxy-D-xylulose-5-phosphate synthase of Bacillus cereus (strain AH187).